Consider the following 319-residue polypeptide: Acyl-coenzyme A thioesterase 8 (319 aa).

The tract at residues 1–20 (MSSPQAPEDGQGCGDRGDPP) is disordered. Residues Asp232, Ser254, and Gln304 each act as charge relay system in the active site. The Microbody targeting signal signature appears at 317-319 (SKL).

It belongs to the C/M/P thioester hydrolase family. Homodimer. As to quaternary structure, (Microbial infection) Interacts with human immunodeficiency virus (HIV-1) Nef (via middle region); this interaction enhances ACOT8 Acyl-CoA thioesterase activity and occurs in a Nef myristoylation-independent manner. According to a second report, the interaction with HIV-1 Nef occurs in a Nef myristoylation-independent manner but does not enhance ACOT8 Acyl-CoA thioesterase activity. In terms of tissue distribution, detected in a T-cell line (at protein level). Ubiquitous.

Its subcellular location is the peroxisome matrix. It carries out the reaction choloyl-CoA + H2O = cholate + CoA + H(+). It catalyses the reaction chenodeoxycholoyl-CoA + H2O = chenodeoxycholate + CoA + H(+). The catalysed reaction is acetyl-CoA + H2O = acetate + CoA + H(+). The enzyme catalyses butanoyl-CoA + H2O = butanoate + CoA + H(+). It carries out the reaction 2-methylpropanoyl-CoA + H2O = 2-methylpropanoate + CoA + H(+). It catalyses the reaction hexanoyl-CoA + H2O = hexanoate + CoA + H(+). The catalysed reaction is octanoyl-CoA + H2O = octanoate + CoA + H(+). The enzyme catalyses decanoyl-CoA + H2O = decanoate + CoA + H(+). It carries out the reaction dodecanoyl-CoA + H2O = dodecanoate + CoA + H(+). It catalyses the reaction tetradecanoyl-CoA + H2O = tetradecanoate + CoA + H(+). The catalysed reaction is hexadecanoyl-CoA + H2O = hexadecanoate + CoA + H(+). The enzyme catalyses octadecanoyl-CoA + H2O = octadecanoate + CoA + H(+). It carries out the reaction malonyl-CoA + H2O = malonate + CoA + H(+). It catalyses the reaction acetoacetyl-CoA + H2O = acetoacetate + CoA + H(+). The catalysed reaction is propanoyl-CoA + H2O = propanoate + CoA + H(+). The enzyme catalyses succinyl-CoA + H2O = succinate + CoA + H(+). It carries out the reaction glutaryl-CoA + H2O = glutarate + CoA + H(+). It catalyses the reaction hexanedioyl-CoA + H2O = hexanedioate + CoA + H(+). The catalysed reaction is octanedioyl-CoA + H2O = octanedioate + CoA + H(+). The enzyme catalyses decanedioyl-CoA + H2O = decanedioate + CoA + H(+). It carries out the reaction dodecanedioyl-CoA + H2O = dodecanedioate + CoA + H(+). It catalyses the reaction (9Z)-tetradecenoyl-CoA + H2O = (9Z)-tetradecenoate + CoA + H(+). The catalysed reaction is (9Z)-hexadecenoyl-CoA + H2O = (9Z)-hexadecenoate + CoA + H(+). The enzyme catalyses (9Z)-octadecenoyl-CoA + H2O = (9Z)-octadecenoate + CoA + H(+). It carries out the reaction (9Z,12Z)-octadecadienoyl-CoA + H2O = (9Z,12Z)-octadecadienoate + CoA + H(+). It catalyses the reaction eicosanoyl-CoA + H2O = eicosanoate + CoA + H(+). The catalysed reaction is (5Z,8Z,11Z,14Z)-eicosatetraenoyl-CoA + H2O = (5Z,8Z,11Z,14Z)-eicosatetraenoate + CoA + H(+). The enzyme catalyses 4,8-dimethylnonanoyl-CoA + H2O = 4,8-dimethylnonanoate + CoA + H(+). It carries out the reaction 2,6-dimethylheptanoyl-CoA + H2O = 2,6-dimethylheptanoate + CoA + H(+). It catalyses the reaction (3S)-3-hydroxy-3-methylglutaryl-CoA + H2O = 3-hydroxy-3-methylglutarate + CoA + H(+). The catalysed reaction is 3alpha,7alpha,12alpha-trihydroxy-5beta-cholestan-26-oyl-CoA + H2O = 3alpha,7alpha,12alpha-trihydroxy-5beta-cholestan-26-oate + CoA + H(+). The enzyme catalyses 2-methyloctadecanoyl-CoA + H2O = 2-methyloctadecanoate + CoA + H(+). It carries out the reaction prostaglandin F2alpha-CoA + H2O = prostaglandin F2alpha + CoA + H(+). It participates in lipid metabolism; fatty acid metabolism. With respect to regulation, inhibited by CoASH (IC(50)=10-15 uM). Also inhibited by cysteine-reactive agents. Catalyzes the hydrolysis of acyl-CoAs into free fatty acids and coenzyme A (CoASH), regulating their respective intracellular levels. Displays no strong substrate specificity with respect to the carboxylic acid moiety of Acyl-CoAs. Hydrolyzes medium length (C2 to C20) straight-chain, saturated and unsaturated acyl-CoAS but is inactive towards substrates with longer aliphatic chains. Moreover, it catalyzes the hydrolysis of CoA esters of bile acids, such as choloyl-CoA and chenodeoxycholoyl-CoA and competes with bile acid CoA:amino acid N-acyltransferase (BAAT). Is also able to hydrolyze CoA esters of dicarboxylic acids. It is involved in the metabolic regulation of peroxisome proliferation. In terms of biological role, (Microbial infection) May mediate Nef-induced down-regulation of CD4 cell-surface expression. The chain is Acyl-coenzyme A thioesterase 8 (ACOT8) from Homo sapiens (Human).